The sequence spans 318 residues: D-alanine--D-alanine ligase (318 aa).

Residues 101-307 (KKIIQYEGLP…FPDLIEKLVE (207 aa)) form the ATP-grasp domain. 135 to 190 (CREMGLPLVVKAPTQGSTIGMSFVHKEEDMAGALELAYDYDPVALVEQFIRGTEVT) is an ATP binding site. Residues D261, E274, and N276 each coordinate Mg(2+).

This sequence belongs to the D-alanine--D-alanine ligase family. It depends on Mg(2+) as a cofactor. The cofactor is Mn(2+).

The protein resides in the cytoplasm. The catalysed reaction is 2 D-alanine + ATP = D-alanyl-D-alanine + ADP + phosphate + H(+). Its pathway is cell wall biogenesis; peptidoglycan biosynthesis. Functionally, cell wall formation. The protein is D-alanine--D-alanine ligase of Pelotomaculum thermopropionicum (strain DSM 13744 / JCM 10971 / SI).